Here is a 201-residue protein sequence, read N- to C-terminus: MTPVLSLDMEDPIRFIDENGSFEVVKVGHNLAIHGKKIFDELAKRNLKIILDLKFCDIPSTVERSIKSWDHPAIIGFTVHSCAGYESVERALSATDKHVFVVVKLTSMEGSLEDYMDRIEKLNKLGCDFVLPGPWAKALREKIKGKILVPGIRMEVKADDQKDVVTLEEMKGIANFAVLGREIYLSENPREKIKRIKEMRL.

Substrate-binding positions include Asp8, Lys26, 52 to 61 (DLKFCDIPST), Thr106, Arg153, Gln161, Gly180, and Arg181. The Proton donor role is filled by Lys54.

It belongs to the OMP decarboxylase family. Type 1 subfamily. As to quaternary structure, homodimer.

The catalysed reaction is orotidine 5'-phosphate + H(+) = UMP + CO2. It functions in the pathway pyrimidine metabolism; UMP biosynthesis via de novo pathway; UMP from orotate: step 2/2. Functionally, catalyzes the decarboxylation of orotidine 5'-monophosphate (OMP) to uridine 5'-monophosphate (UMP). The sequence is that of Orotidine 5'-phosphate decarboxylase (pyrF) from Thermotoga maritima (strain ATCC 43589 / DSM 3109 / JCM 10099 / NBRC 100826 / MSB8).